Here is a 594-residue protein sequence, read N- to C-terminus: Cryptochrome-2 (594 aa).

The region spanning 21 to 150 is the Photolyase/cryptochrome alpha/beta domain; the sequence is ASSVHWFRKG…EVVTENSHTL (130 aa). A Glycyl lysine isopeptide (Lys-Gly) (interchain with G-Cter in ubiquitin) cross-link involves residue Lys29. Ser89 carries the phosphoserine modification. Glycyl lysine isopeptide (Lys-Gly) (interchain with G-Cter in ubiquitin) cross-links involve residues Lys125 and Lys241. At Ser265 the chain carries Phosphoserine; by MAPK. Ser270 contacts FAD. The residue at position 298 (Ser298) is a Phosphoserine. Gln307 contributes to the FAD binding site. A Glycyl lysine isopeptide (Lys-Gly) (interchain with G-Cter in ubiquitin) cross-link involves residue Lys347. FAD is bound by residues His373 and 405-407; that span reads DAD. Residues 389 to 488 form a required for inhibition of CLOCK-BMAL1-mediated transcription region; the sequence is WVSWESGVRV…IIGVDYPRPI (100 aa). Residues Lys474 and Lys503 each participate in a glycyl lysine isopeptide (Lys-Gly) (interchain with G-Cter in ubiquitin) cross-link. Residues 532–594 are disordered; it reads VAEPGSSQAG…PAQEPPSKDS (63 aa). Over residues 536–547 the composition is skewed to polar residues; the sequence is GSSQAGSISNTG. Position 553 is a phosphoserine; by GSK3-beta (Ser553). Ser557 carries the post-translational modification Phosphoserine; by DYRK1A and MAPK.

The protein belongs to the DNA photolyase class-1 family. In terms of assembly, component of the circadian core oscillator, which includes the CRY proteins, CLOCK or NPAS2, BMAL1 or BMAL2, CSNK1D and/or CSNK1E, TIMELESS, and the PER proteins. Interacts with TIMELESS. Interacts directly with PER1, PER2 and PER3; interaction with PER2 inhibits its ubiquitination and vice versa. Interacts with CLOCK-BMAL1. Interacts with CLOCK. Interacts with BMAL1. Interacts with NFIL3. Interacts with FBXL3 and FBXL21. FBXL3, PER2 and the cofactor FAD compete for overlapping binding sites. FBXL3 cannot bind CRY2 that interacts already with PER2 or that contains bound FAD. Interacts with PPP5C (via TPR repeats); the interaction down-regulates the PPP5C phosphatase activity on CSNK1E. Interacts with nuclear receptors AR and NR3C1/GR; the interaction is ligand dependent. Interacts with PRKDC and CIART. Interacts with DDB1, USP7 and TARDBP. Interacts with HNF4A and PPARA. Interacts with PPARD (via domain NR LBD) and NR1I2 (via domain NR LBD) in a ligand-dependent manner. Interacts with PPARG, NR1I3 and VDR in a ligand-dependent manner. FAD is required as a cofactor. Requires (6R)-5,10-methylene-5,6,7,8-tetrahydrofolate as cofactor. Phosphorylation on Ser-265 by MAPK is important for the inhibition of CLOCK-BMAL1-mediated transcriptional activity. Phosphorylation by CSKNe requires interaction with PER1 or PER2. Phosphorylated in a circadian manner at Ser-553 and Ser-557 in the suprachiasmatic nucleus (SCN) and liver. Phosphorylation at Ser-557 by DYRK1A promotes subsequent phosphorylation at Ser-553 by GSK3-beta: the two-step phosphorylation at the neighboring Ser residues leads to its proteasomal degradation. In terms of processing, ubiquitinated by the SCF(FBXL3) and SCF(FBXL21) complexes, regulating the balance between degradation and stabilization. The SCF(FBXL3) complex is mainly nuclear and mediates ubiquitination and subsequent degradation of CRY2. In contrast, cytoplasmic SCF(FBXL21) complex-mediated ubiquitination leads to stabilize CRY2 and counteract the activity of the SCF(FBXL3) complex. The SCF(FBXL3) and SCF(FBXL21) complexes probably mediate ubiquitination at different Lys residues. The SCF(FBXL3) complex recognizes and binds CRY2 phosphorylated at Ser-553 and Ser-557. Ubiquitination may be inhibited by PER2. Deubiquitinated by USP7. In terms of tissue distribution, expressed in all tissues examined including heart, cerebellum, cerebral cortex, lung, liver, muscle, kidney and ovary. Highest levels in heart, liver and ovary. Highly expressed in the suprachiasmatic nucleus (SCN).

The protein localises to the cytoplasm. The protein resides in the nucleus. Transcriptional repressor which forms a core component of the circadian clock. The circadian clock, an internal time-keeping system, regulates various physiological processes through the generation of approximately 24 hour circadian rhythms in gene expression, which are translated into rhythms in metabolism and behavior. It is derived from the Latin roots 'circa' (about) and 'diem' (day) and acts as an important regulator of a wide array of physiological functions including metabolism, sleep, body temperature, blood pressure, endocrine, immune, cardiovascular, and renal function. Consists of two major components: the central clock, residing in the suprachiasmatic nucleus (SCN) of the brain, and the peripheral clocks that are present in nearly every tissue and organ system. Both the central and peripheral clocks can be reset by environmental cues, also known as Zeitgebers (German for 'timegivers'). The predominant Zeitgeber for the central clock is light, which is sensed by retina and signals directly to the SCN. The central clock entrains the peripheral clocks through neuronal and hormonal signals, body temperature and feeding-related cues, aligning all clocks with the external light/dark cycle. Circadian rhythms allow an organism to achieve temporal homeostasis with its environment at the molecular level by regulating gene expression to create a peak of protein expression once every 24 hours to control when a particular physiological process is most active with respect to the solar day. Transcription and translation of core clock components (CLOCK, NPAS2, BMAL1, BMAL2, PER1, PER2, PER3, CRY1 and CRY2) plays a critical role in rhythm generation, whereas delays imposed by post-translational modifications (PTMs) are important for determining the period (tau) of the rhythms (tau refers to the period of a rhythm and is the length, in time, of one complete cycle). A diurnal rhythm is synchronized with the day/night cycle, while the ultradian and infradian rhythms have a period shorter and longer than 24 hours, respectively. Disruptions in the circadian rhythms contribute to the pathology of cardiovascular diseases, cancer, metabolic syndromes and aging. A transcription/translation feedback loop (TTFL) forms the core of the molecular circadian clock mechanism. Transcription factors, CLOCK or NPAS2 and BMAL1 or BMAL2, form the positive limb of the feedback loop, act in the form of a heterodimer and activate the transcription of core clock genes and clock-controlled genes (involved in key metabolic processes), harboring E-box elements (5'-CACGTG-3') within their promoters. The core clock genes: PER1/2/3 and CRY1/2 which are transcriptional repressors form the negative limb of the feedback loop and interact with the CLOCK|NPAS2-BMAL1|BMAL2 heterodimer inhibiting its activity and thereby negatively regulating their own expression. This heterodimer also activates nuclear receptors NR1D1/2 and RORA/B/G, which form a second feedback loop and which activate and repress BMAL1 transcription, respectively. CRY1 and CRY2 have redundant functions but also differential and selective contributions at least in defining the pace of the SCN circadian clock and its circadian transcriptional outputs. Less potent transcriptional repressor in cerebellum and liver than CRY1, though less effective in lengthening the period of the SCN oscillator. Seems to play a critical role in tuning SCN circadian period by opposing the action of CRY1. With CRY1, dispensable for circadian rhythm generation but necessary for the development of intercellular networks for rhythm synchrony. May mediate circadian regulation of cAMP signaling and gluconeogenesis by blocking glucagon-mediated increases in intracellular cAMP concentrations and in CREB1 phosphorylation. Besides its role in the maintenance of the circadian clock, is also involved in the regulation of other processes. Plays a key role in glucose and lipid metabolism modulation, in part, through the transcriptional regulation of genes involved in these pathways, such as LEP or ACSL4. Represses glucocorticoid receptor NR3C1/GR-induced transcriptional activity by binding to glucocorticoid response elements (GREs). Represses the CLOCK-BMAL1 induced transcription of BHLHE40/DEC1 and NAMPT. Represses PPARD and its target genes in the skeletal muscle and limits exercise capacity. Represses the transcriptional activity of NR1I2. The chain is Cryptochrome-2 (Cry2) from Rattus norvegicus (Rat).